A 299-amino-acid chain; its full sequence is ATP phosphoribosyltransferase (299 aa).

The protein belongs to the ATP phosphoribosyltransferase family. Long subfamily. In terms of assembly, equilibrium between an active dimeric form, an inactive hexameric form and higher aggregates. Interconversion between the various forms is largely reversible and is influenced by the natural substrates and inhibitors of the enzyme. It depends on Mg(2+) as a cofactor.

It is found in the cytoplasm. It carries out the reaction 1-(5-phospho-beta-D-ribosyl)-ATP + diphosphate = 5-phospho-alpha-D-ribose 1-diphosphate + ATP. The protein operates within amino-acid biosynthesis; L-histidine biosynthesis; L-histidine from 5-phospho-alpha-D-ribose 1-diphosphate: step 1/9. With respect to regulation, feedback inhibited by histidine. Catalyzes the condensation of ATP and 5-phosphoribose 1-diphosphate to form N'-(5'-phosphoribosyl)-ATP (PR-ATP). Has a crucial role in the pathway because the rate of histidine biosynthesis seems to be controlled primarily by regulation of HisG enzymatic activity. This chain is ATP phosphoribosyltransferase, found in Edwardsiella ictaluri (strain 93-146).